The primary structure comprises 593 residues: La-related protein 7 (593 aa).

Over residues M1–N11 the composition is skewed to polar residues. The tract at residues M1–K28 is disordered. The segment covering K12 to D24 has biased composition (basic and acidic residues). The region spanning R30–P121 is the HTH La-type RNA-binding domain. The RRM domain occupies R127–T205. Residues P191 to D363 are disordered. Residues K231–A240 are compositionally biased toward basic residues. Over residues A248–I259 the composition is skewed to acidic residues. Basic and acidic residues-rich tracts occupy residues E295–R307, S314–P340, and Q348–D363. The xRRM domain occupies Q461–K574.

This sequence belongs to the LARP7 family. Core component of the 7SK RNP complex. Associates with box C/D small nucleolar ribonucleoprotein (snoRNP) complexes.

The protein localises to the nucleus. It is found in the nucleoplasm. Its function is as follows. RNA-binding protein that specifically binds distinct small nuclear RNA (snRNAs) and regulates their processing and function. Specifically binds the 7SK snRNA (7SK RNA) and acts as a core component of the 7SK ribonucleoprotein (RNP) complex, thereby acting as a negative regulator of transcription elongation by RNA polymerase II. The 7SK RNP complex sequesters the positive transcription elongation factor b (P-TEFb) in a large inactive 7SK RNP complex preventing RNA polymerase II phosphorylation and subsequent transcriptional elongation. The 7SK RNP complex also promotes snRNA gene transcription by RNA polymerase II via interaction with the little elongation complex (LEC). LARP7 specifically binds to the highly conserved 3'-terminal U-rich stretch of 7SK RNA; on stimulation, remains associated with 7SK RNA, whereas P-TEFb is released from the complex. LARP7 also acts as a regulator of mRNA splicing fidelity by promoting U6 snRNA processing. Specifically binds U6 snRNAs and associates with a subset of box C/D RNP complexes: promotes U6 snRNA 2'-O-methylation by facilitating U6 snRNA loading into box C/D RNP complexes. U6 snRNA 2'-O-methylation is required for mRNA splicing fidelity. The sequence is that of La-related protein 7 from Xenopus tropicalis (Western clawed frog).